The following is a 353-amino-acid chain: Cellulose-complementing protein (353 aa).

3 disordered regions span residues 1 to 21 (MSASGSDEVAGGGQAGSPQDF), 75 to 94 (PQIAVAPPPPPVVPDPPAIV), and 117 to 337 (AVPA…SPRP). The span at 80 to 91 (APPPPPVVPDPP) shows a compositional bias: pro residues. 2 stretches are compositionally biased toward low complexity: residues 117–132 (AVPAEPPVQEAPVQAA) and 142–164 (IAEQAPPAAPDPASVPYANVAAA). A compositionally biased stretch (pro residues) spans 165 to 175 (PVPPDPAPVTP). Composition is skewed to polar residues over residues 196–226 (QVRTVQEGATPSRVPSRSMNAFPRTSASSIS) and 278–304 (STRSVRSNVSRMTSMTKTDTNSSQASR).

The sequence is that of Cellulose-complementing protein (ccpAX) from Komagataeibacter xylinus (Gluconacetobacter xylinus).